Here is a 453-residue protein sequence, read N- to C-terminus: Kynureninase (453 aa).

Residues L114, T115, 142-145, D232, H235, and Y257 each bind pyridoxal 5'-phosphate; that span reads FPSD. Position 258 is an N6-(pyridoxal phosphate)lysine (K258). W286 provides a ligand contact to pyridoxal 5'-phosphate.

Belongs to the kynureninase family. Homodimer. The cofactor is pyridoxal 5'-phosphate.

The protein localises to the cytoplasm. It catalyses the reaction L-kynurenine + H2O = anthranilate + L-alanine + H(+). The catalysed reaction is 3-hydroxy-L-kynurenine + H2O = 3-hydroxyanthranilate + L-alanine + H(+). It participates in amino-acid degradation; L-kynurenine degradation; L-alanine and anthranilate from L-kynurenine: step 1/1. It functions in the pathway cofactor biosynthesis; NAD(+) biosynthesis; quinolinate from L-kynurenine: step 2/3. In terms of biological role, catalyzes the cleavage of L-kynurenine (L-Kyn) and L-3-hydroxykynurenine (L-3OHKyn) into anthranilic acid (AA) and 3-hydroxyanthranilic acid (3-OHAA), respectively. This is Kynureninase from Cryptococcus neoformans var. neoformans serotype D (strain JEC21 / ATCC MYA-565) (Filobasidiella neoformans).